The sequence spans 128 residues: uncharacterized protein (128 aa).

A compositionally biased stretch (basic and acidic residues) spans Met-1–Ser-11. Residues Met-1–Asp-40 form a disordered region. Over residues Lys-12–Asn-37 the composition is skewed to polar residues.

This is an uncharacterized protein from Caenorhabditis elegans.